The following is a 50-amino-acid chain: Cytochrome c-555 (50 aa).

Residues Cys7, Cys10, His11, and Met25 each contribute to the heme site.

In terms of processing, binds 1 heme group per subunit.

Its subcellular location is the cell membrane. The chain is Cytochrome c-555 from Schinkia azotoformans (Bacillus azotoformans).